The primary structure comprises 239 residues: Serine protease SplF (239 aa).

The signal sequence occupies residues 1–36 (MNKNIIIKSIAALTILTSITGVGTTMVEGIQQTAKA). Active-site charge relay system residues include His75, Asp114, and Ser192.

Belongs to the peptidase S1B family.

Its subcellular location is the secreted. The chain is Serine protease SplF (splF) from Staphylococcus aureus (strain NCTC 8325 / PS 47).